The following is a 118-amino-acid chain: Large ribosomal subunit protein bL20 (118 aa).

The protein belongs to the bacterial ribosomal protein bL20 family.

Functionally, binds directly to 23S ribosomal RNA and is necessary for the in vitro assembly process of the 50S ribosomal subunit. It is not involved in the protein synthesizing functions of that subunit. The polypeptide is Large ribosomal subunit protein bL20 (Sulfurimonas denitrificans (strain ATCC 33889 / DSM 1251) (Thiomicrospira denitrificans (strain ATCC 33889 / DSM 1251))).